A 241-amino-acid polypeptide reads, in one-letter code: MNYKISIRYDGSLFYGWAKQPQKRTVQEHLETVFKTIFKINDIKIIGSGRTDRGVHAYEQVFSVNHHQLNYEPQVIYQALCSQIDPDVQILKVQSVHDTFHAQHDAISKTYQYIINDYEFDLFKHNYEYFIHQKINDQKLLEALELFVGEYDFKSFSTSELPLTTRKINWVKITRNTRLEIYINGNGFLKNMVRMIISACIDYVFNKISLTQIKTLLTNPKKGASVKLAPPCGLYLYKVYY.

Asp-52 functions as the Nucleophile in the catalytic mechanism. Tyr-111 contacts substrate.

Belongs to the tRNA pseudouridine synthase TruA family. Homodimer.

The enzyme catalyses uridine(38/39/40) in tRNA = pseudouridine(38/39/40) in tRNA. In terms of biological role, formation of pseudouridine at positions 38, 39 and 40 in the anticodon stem and loop of transfer RNAs. The sequence is that of tRNA pseudouridine synthase A from Ureaplasma urealyticum serovar 10 (strain ATCC 33699 / Western).